The chain runs to 361 residues: Fructose-bisphosphate aldolase (361 aa).

Thr2 bears the N-acetylthreonine mark. Positions 56 and 147 each coordinate substrate. Glu188 functions as the Proton acceptor in the catalytic mechanism. The active-site Schiff-base intermediate with dihydroxyacetone-P is Lys230.

Belongs to the class I fructose-bisphosphate aldolase family. In terms of assembly, homotetramer. Mainly expressed in the heads and partly in the thoraxes of adult flies. In terms of tissue distribution, expressed in all adult tissues. The Alpha-beta mRNA shows strong expression in the abdomens of adults. As to expression, mainly expressed in adult abdominal regions and is also expressed in lesser amounts in other parts of the body. The Beta-gamma mRNA is expressed in adult heads.

The enzyme catalyses beta-D-fructose 1,6-bisphosphate = D-glyceraldehyde 3-phosphate + dihydroxyacetone phosphate. The protein operates within carbohydrate degradation; glycolysis; D-glyceraldehyde 3-phosphate and glycerone phosphate from D-glucose: step 4/4. Its function is as follows. Enzyme of the glycolytic pathway. Glycolysis is essential in glial cells but not in neurons; neurons rely on the citric acid cycle for their energy needs, and on lactate and alanine secreted into the hemolymph by glial cells to fuel it. May take part in developmental stage-specific or tissue -specific sugar-phosphate metabolisms. Protein acts on two substrates fructose 1,6-bisphosphate and fructose 1-phosphate (like other class I aldolases). The polypeptide is Fructose-bisphosphate aldolase (Drosophila melanogaster (Fruit fly)).